Reading from the N-terminus, the 930-residue chain is Pyruvate dehydrogenase E1 component (930 aa).

The segment covering 1–10 (MTTDFARHDL) has biased composition (basic and acidic residues). The segment at 1-21 (MTTDFARHDLAQNSNSASEPD) is disordered. K375 is covalently cross-linked (Isoglutamyl lysine isopeptide (Lys-Gln) (interchain with Q-Cter in protein Pup)).

In terms of assembly, homodimer. Part of the PDH complex, consisting of multiple copies of AceE (E1), DlaT (E2) and Lpd (E3). Requires Mg(2+) as cofactor. Thiamine diphosphate is required as a cofactor.

It catalyses the reaction N(6)-[(R)-lipoyl]-L-lysyl-[protein] + pyruvate + H(+) = N(6)-[(R)-S(8)-acetyldihydrolipoyl]-L-lysyl-[protein] + CO2. In terms of biological role, component of the pyruvate dehydrogenase (PDH) complex, that catalyzes the overall conversion of pyruvate to acetyl-CoA and CO(2). AceE has reductase activity with pyruvate but does not react with 2-oxoglutarate. This is Pyruvate dehydrogenase E1 component (aceE) from Mycobacterium tuberculosis (strain ATCC 25618 / H37Rv).